A 304-amino-acid polypeptide reads, in one-letter code: UDP-N-acetylenolpyruvoylglucosamine reductase (304 aa).

One can recognise an FAD-binding PCMH-type domain in the interval 33 to 198 (KVGGPVDILL…LRATFNLVNG (166 aa)). Arg-177 is a catalytic residue. Residue Ser-227 is the Proton donor of the active site. The active site involves Glu-297.

Belongs to the MurB family. FAD serves as cofactor.

It is found in the cytoplasm. It carries out the reaction UDP-N-acetyl-alpha-D-muramate + NADP(+) = UDP-N-acetyl-3-O-(1-carboxyvinyl)-alpha-D-glucosamine + NADPH + H(+). It participates in cell wall biogenesis; peptidoglycan biosynthesis. In terms of biological role, cell wall formation. This Clostridium beijerinckii (strain ATCC 51743 / NCIMB 8052) (Clostridium acetobutylicum) protein is UDP-N-acetylenolpyruvoylglucosamine reductase.